A 417-amino-acid polypeptide reads, in one-letter code: Tumor necrosis factor receptor superfamily member 25 (417 aa).

The N-terminal stretch at 1 to 24 (MEQRPRGCAAVAAALLLVLLGARA) is a signal peptide. Topologically, residues 25–199 (QGGTRSPRCD…RCAAVCGWRQ (175 aa)) are extracellular. 4 TNFR-Cys repeats span residues 34-71 (DCAG…STCL), 72-115 (VCPQ…DTRC), 116-163 (GCKP…TDCG), and 164-192 (TCLP…ERCA). Intrachain disulfides connect Cys35–Cys47, Cys48–Cys61, Cys51–Cys70, Cys73–Cys89, Cys92–Cys107, Cys95–Cys115, Cys117–Cys130, Cys138–Cys155, Cys141–Cys162, Cys165–Cys176, Cys179–Cys191, and Cys187–Cys195. An N-linked (GlcNAc...) asparagine glycan is attached at Asn67. N-linked (GlcNAc...) asparagine glycosylation occurs at Asn106. Residues 200–220 (MFWVQVLLAGLVVPLLLGATL) form a helical membrane-spanning segment. The Cytoplasmic portion of the chain corresponds to 221 to 417 (TYTYRHCWPH…DLRSRLQRGP (197 aa)). The 82-residue stretch at 332 to 413 (GPQLYDVMDA…GCVEDLRSRL (82 aa)) folds into the Death domain. Residue Arg352 is glycosylated ((Microbial infection) N-beta-linked (GlcNAc) arginine).

Homodimer. Interacts strongly via the death domains with TNFRSF1 and TRADD to activate at least two distinct signaling cascades, apoptosis and NF-kappa-B signaling. Interacts with BAG4. (Microbial infection) Glycosylated at Arg-352 by enteropathogenic E.coli protein NleB1. In terms of processing, glycosylated. Abundantly expressed in thymocytes and lymphocytes. Detected in lymphocyte-rich tissues such as thymus, colon, intestine, and spleen. Also found in the prostate.

Its subcellular location is the cell membrane. The protein resides in the secreted. Functionally, receptor for TNFSF12/APO3L/TWEAK. Interacts directly with the adapter TRADD. Mediates activation of NF-kappa-B and induces apoptosis. May play a role in regulating lymphocyte homeostasis. The sequence is that of Tumor necrosis factor receptor superfamily member 25 (TNFRSF25) from Homo sapiens (Human).